A 170-amino-acid chain; its full sequence is Protein SprT (170 aa).

The 145-residue stretch at 19–163 (REKLQQANLR…RCLHCGTSLR (145 aa)) folds into the SprT-like domain. His78 contacts Zn(2+). Glu79 is an active-site residue. His82 provides a ligand contact to Zn(2+).

Belongs to the SprT family. It depends on Zn(2+) as a cofactor.

Its subcellular location is the cytoplasm. The protein is Protein SprT of Erwinia tasmaniensis (strain DSM 17950 / CFBP 7177 / CIP 109463 / NCPPB 4357 / Et1/99).